The following is a 218-amino-acid chain: Hypoxanthine-guanine phosphoribosyltransferase (218 aa).

K69 contacts GMP. Residue K103 is modified to N6-acetyllysine. K115 is covalently cross-linked (Glycyl lysine isopeptide (Lys-Gly) (interchain with G-Cter in SUMO1); alternate). K115 participates in a covalent cross-link: Glycyl lysine isopeptide (Lys-Gly) (interchain with G-Cter in SUMO2); alternate. Residues 134–142 (EDIIDTGKT), K166, 186–188 (KFV), and D194 contribute to the GMP site. D138 acts as the Proton acceptor in catalysis. At T142 the chain carries Phosphothreonine. A Mg(2+)-binding site is contributed by D194.

The protein belongs to the purine/pyrimidine phosphoribosyltransferase family. As to quaternary structure, homotetramer. Requires Mg(2+) as cofactor.

It is found in the cytoplasm. The enzyme catalyses IMP + diphosphate = hypoxanthine + 5-phospho-alpha-D-ribose 1-diphosphate. The catalysed reaction is GMP + diphosphate = guanine + 5-phospho-alpha-D-ribose 1-diphosphate. It functions in the pathway purine metabolism; IMP biosynthesis via salvage pathway; IMP from hypoxanthine: step 1/1. Its function is as follows. Converts guanine to guanosine monophosphate, and hypoxanthine to inosine monophosphate. Transfers the 5-phosphoribosyl group from 5-phosphoribosylpyrophosphate onto the purine. Plays a central role in the generation of purine nucleotides through the purine salvage pathway. The protein is Hypoxanthine-guanine phosphoribosyltransferase (Hprt1) of Rattus norvegicus (Rat).